A 302-amino-acid chain; its full sequence is 4-diphosphocytidyl-2-C-methyl-D-erythritol kinase (302 aa).

Lys20 is an active-site residue. Residue 106 to 116 coordinates ATP; sequence PVASGVGGGSG. The active site involves Asp148.

This sequence belongs to the GHMP kinase family. IspE subfamily.

It catalyses the reaction 4-CDP-2-C-methyl-D-erythritol + ATP = 4-CDP-2-C-methyl-D-erythritol 2-phosphate + ADP + H(+). It participates in isoprenoid biosynthesis; isopentenyl diphosphate biosynthesis via DXP pathway; isopentenyl diphosphate from 1-deoxy-D-xylulose 5-phosphate: step 3/6. Functionally, catalyzes the phosphorylation of the position 2 hydroxy group of 4-diphosphocytidyl-2C-methyl-D-erythritol. This is 4-diphosphocytidyl-2-C-methyl-D-erythritol kinase from Bartonella henselae (strain ATCC 49882 / DSM 28221 / CCUG 30454 / Houston 1) (Rochalimaea henselae).